The sequence spans 240 residues: Prolactin-8A6 (240 aa).

Positions 1-30 (MALLLSQPHFSGPLLLLVVSNLLLWEKAAS) are cleaved as a signal peptide. 3 disulfides stabilise this stretch: Cys-34/Cys-41, Cys-101/Cys-216, and Cys-233/Cys-240. N-linked (GlcNAc...) asparagine glycosylation is present at Asn-212.

Belongs to the somatotropin/prolactin family. As to expression, expressed specifically in the spongiotrophoblast and trophoblast giant cells from the junctional zone of the chorioallantoic placenta.

It localises to the secreted. This Mus musculus (Mouse) protein is Prolactin-8A6 (Prl8a6).